We begin with the raw amino-acid sequence, 366 residues long: Carbamoyl phosphate synthase small chain (366 aa).

The interval 1-171 (MQSKRYLVLE…KTPYVSTGKD (171 aa)) is CPSase. L-glutamine-binding residues include Ser47, Gly221, and Gly223. Positions 173 to 360 (SVVLVDFGKK…VAMMTNFKEK (188 aa)) constitute a Glutamine amidotransferase type-1 domain. Residue Cys248 is the Nucleophile of the active site. L-glutamine-binding residues include Leu249, Gln252, Asn290, Gly292, and Tyr293. Active-site residues include His333 and Glu335.

Belongs to the CarA family. In terms of assembly, composed of two chains; the small (or glutamine) chain promotes the hydrolysis of glutamine to ammonia, which is used by the large (or ammonia) chain to synthesize carbamoyl phosphate. Tetramer of heterodimers (alpha,beta)4.

The enzyme catalyses hydrogencarbonate + L-glutamine + 2 ATP + H2O = carbamoyl phosphate + L-glutamate + 2 ADP + phosphate + 2 H(+). It catalyses the reaction L-glutamine + H2O = L-glutamate + NH4(+). The protein operates within amino-acid biosynthesis; L-arginine biosynthesis; carbamoyl phosphate from bicarbonate: step 1/1. Its pathway is pyrimidine metabolism; UMP biosynthesis via de novo pathway; (S)-dihydroorotate from bicarbonate: step 1/3. Its function is as follows. Small subunit of the glutamine-dependent carbamoyl phosphate synthetase (CPSase). CPSase catalyzes the formation of carbamoyl phosphate from the ammonia moiety of glutamine, carbonate, and phosphate donated by ATP, constituting the first step of 2 biosynthetic pathways, one leading to arginine and/or urea and the other to pyrimidine nucleotides. The small subunit (glutamine amidotransferase) binds and cleaves glutamine to supply the large subunit with the substrate ammonia. The sequence is that of Carbamoyl phosphate synthase small chain from Staphylococcus aureus (strain COL).